The following is an 88-amino-acid chain: Small ribosomal subunit protein bS16 (88 aa).

Belongs to the bacterial ribosomal protein bS16 family.

The chain is Small ribosomal subunit protein bS16 from Anaeromyxobacter dehalogenans (strain 2CP-1 / ATCC BAA-258).